A 624-amino-acid polypeptide reads, in one-letter code: tRNA uridine 5-carboxymethylaminomethyl modification enzyme MnmG (624 aa).

FAD contacts are provided by residues 13–18 (GGGHAG), Val-125, and Ser-180. 273-287 (GPRYCPSIEDKIVRF) is a binding site for NAD(+). Gln-370 is an FAD binding site.

Belongs to the MnmG family. As to quaternary structure, homodimer. Heterotetramer of two MnmE and two MnmG subunits. FAD serves as cofactor.

Its subcellular location is the cytoplasm. Its function is as follows. NAD-binding protein involved in the addition of a carboxymethylaminomethyl (cmnm) group at the wobble position (U34) of certain tRNAs, forming tRNA-cmnm(5)s(2)U34. The chain is tRNA uridine 5-carboxymethylaminomethyl modification enzyme MnmG from Legionella pneumophila (strain Lens).